Here is a 148-residue protein sequence, read N- to C-terminus: SsrA-binding protein (148 aa).

The tract at residues 129 to 148 is disordered; sequence ETEKDRDWQREKARLMREKA.

Belongs to the SmpB family.

The protein resides in the cytoplasm. Its function is as follows. Required for rescue of stalled ribosomes mediated by trans-translation. Binds to transfer-messenger RNA (tmRNA), required for stable association of tmRNA with ribosomes. tmRNA and SmpB together mimic tRNA shape, replacing the anticodon stem-loop with SmpB. tmRNA is encoded by the ssrA gene; the 2 termini fold to resemble tRNA(Ala) and it encodes a 'tag peptide', a short internal open reading frame. During trans-translation Ala-aminoacylated tmRNA acts like a tRNA, entering the A-site of stalled ribosomes, displacing the stalled mRNA. The ribosome then switches to translate the ORF on the tmRNA; the nascent peptide is terminated with the 'tag peptide' encoded by the tmRNA and targeted for degradation. The ribosome is freed to recommence translation, which seems to be the essential function of trans-translation. The chain is SsrA-binding protein from Ralstonia nicotianae (strain ATCC BAA-1114 / GMI1000) (Ralstonia solanacearum).